The sequence spans 166 residues: Large ribosomal subunit protein uL10 (166 aa).

Belongs to the universal ribosomal protein uL10 family. As to quaternary structure, part of the ribosomal stalk of the 50S ribosomal subunit. The N-terminus interacts with L11 and the large rRNA to form the base of the stalk. The C-terminus forms an elongated spine to which L12 dimers bind in a sequential fashion forming a multimeric L10(L12)X complex.

In terms of biological role, forms part of the ribosomal stalk, playing a central role in the interaction of the ribosome with GTP-bound translation factors. The sequence is that of Large ribosomal subunit protein uL10 from Streptococcus pneumoniae (strain 70585).